Here is a 430-residue protein sequence, read N- to C-terminus: Tyrosine--tRNA ligase (430 aa).

Y32 lines the L-tyrosine pocket. Positions 37–46 (PTADSLHIGH) match the 'HIGH' region motif. Residues Y172 and Q176 each contribute to the L-tyrosine site. The 'KMSKS' region signature appears at 232–236 (KFGKT). K235 provides a ligand contact to ATP. The S4 RNA-binding domain maps to 362-429 (VKAVDLFVDN…GKKNYYLIIA (68 aa)).

The protein belongs to the class-I aminoacyl-tRNA synthetase family. TyrS type 1 subfamily. As to quaternary structure, homodimer.

It is found in the cytoplasm. It carries out the reaction tRNA(Tyr) + L-tyrosine + ATP = L-tyrosyl-tRNA(Tyr) + AMP + diphosphate + H(+). Its function is as follows. Catalyzes the attachment of tyrosine to tRNA(Tyr) in a two-step reaction: tyrosine is first activated by ATP to form Tyr-AMP and then transferred to the acceptor end of tRNA(Tyr). In Bacteroides fragilis (strain ATCC 25285 / DSM 2151 / CCUG 4856 / JCM 11019 / LMG 10263 / NCTC 9343 / Onslow / VPI 2553 / EN-2), this protein is Tyrosine--tRNA ligase.